The following is a 251-amino-acid chain: MDKEREKQVYLARLAEQAERYDEMVEAMKTVAKMDVELTVEERNLVSVGYKNVIGARRASWRILSSIEQKEESKGHDQNVKRIKTYQQRVEDELTKYALTLSVIDEHVVPSSTSGESTVFYYKMKGDYYRYLAEFKSGDDRKEAADQSLKAYEAATATASADLAPTHPIRLGLALNFSVFYYEILNSPERACHLAKQAFDEAIAELDSLSEESYKDSTLIMQLLRDNFTLWTSDLEEGGEHSKGDERQGEN.

Belongs to the 14-3-3 family. As to expression, most abundant in roots and flowers.

This chain is 14-3-3-like protein, found in Nicotiana tabacum (Common tobacco).